The chain runs to 743 residues: Serine/threonine-protein kinase GD17699 (743 aa).

Residues 54–78 (NVQEDNSYNRDCDSPVSSSSEPEKE) are disordered. Doublecortin domains follow at residues 154 to 240 (LRIK…VEYN) and 309 to 392 (RIVT…AEDF). Residues 473 to 731 (YTLGRIIGDG…SEDILDHPWT (259 aa)) form the Protein kinase domain. ATP contacts are provided by residues 479–487 (IGDGNFAIV) and Lys502. The Proton acceptor role is filled by Asp594.

Belongs to the protein kinase superfamily. CAMK Ser/Thr protein kinase family. CaMK subfamily.

The catalysed reaction is L-seryl-[protein] + ATP = O-phospho-L-seryl-[protein] + ADP + H(+). It carries out the reaction L-threonyl-[protein] + ATP = O-phospho-L-threonyl-[protein] + ADP + H(+). The chain is Serine/threonine-protein kinase GD17699 from Drosophila simulans (Fruit fly).